Reading from the N-terminus, the 22-residue chain is Antimicrobial peptide 4 (22 aa).

In terms of tissue distribution, expressed by the skin glands.

It is found in the secreted. Its function is as follows. Has very strong antimicrobial activity against Gram-positive bacterium S.aureus and yeast C.albicans, and very weak activity against Gram-negative bacterium E.coli. Has strong hemolytic activity against human red blood cells. The polypeptide is Antimicrobial peptide 4 (Xenopus tropicalis (Western clawed frog)).